Consider the following 588-residue polypeptide: Serine/threonine-protein phosphatase 2A 65 kDa regulatory subunit A alpha isoform (588 aa).

HEAT repeat units follow at residues 2-42, 44-80, 81-119, 158-196, 197-235, 236-274, 275-313, 315-352, 353-391, 393-430, 432-469, 470-508, 509-547, and 549-586; these read AMVD…ALGE, RTRK…FVGG, IEFA…QMKE, DVLK…TVES, TFLI…LLEP, QDCV…AVGP, DCTR…LLNP, LAIQ…ILGK, DSTI…VIGI, LLSQ…QLGI, FFDD…EFGP, EWAM…VMGS, EITC…IVDQ, and VVDK…STAA.

The protein belongs to the phosphatase 2A regulatory subunit A family. As to quaternary structure, PP2A consists of a common heterodimeric core enzyme, composed of a 36 kDa catalytic subunit (subunit C) and a 65 kDa constant regulatory subunit (subunit A), that associates with a variety of regulatory subunits such as subunits B (the R2/B/PR55/B55, R3/B''/PR72/PR130/PR59 and R5/B'/B56 families) and the regulatory subunits TON2. Interacts with CYP20-1/ROC7. Also interacts with phosphatidic acid (PA), a lipid signaling molecule. Interacts with CHIP. Interacts with SIC/RON3. Post-translationally, ubiquitinated. CHIP-mediated ubiquitination enhances phosphatase activity after an abiotic stress such as low temperature or darkness. In terms of tissue distribution, mostly expressed in cell-dividing tissues such as apical meristems. Ubiquitous, with higher levels in roots and flowers (at protein level).

It is found in the cytoplasm. Its subcellular location is the cytosol. The protein localises to the nucleus. Its function is as follows. The A subunit of protein phosphatase 2A serves as a scaffolding molecule to coordinate the assembly of the catalytic subunit and a variable regulatory B subunit. Seems to act as a positive regulator of PP2A catalytic activity. Confers resistance to phosphatase inhibitors such as okadaic acid and cantharidin. Involved during developmental process such as seedling and floral developments, root gravitropism, and stomatal opening regulation. Involved in the regulation of auxin efflux, especially during basipetal (tips to base) auxin transport in roots, and appears to contribute to the perception of auxin efflux inhibitors such as 1-N-naphthylphthalamic acid (NPA) and to semicarbazone I (substituted phenylsemicarbazone of 2-acetylarylcarboxylic acids) (SCB-I). Modulates the magnitude of ethylene response in the hypocotyl and stem, and functions as a general positive transducer of early ABA signaling. The holoenzyme composed of PP2AA1, PP2A4 and B'ZETA or B'ETA acts as a negative regulator of plant innate immunity by controlling BAK1 phosphorylation state and activation in surface-localized immune receptor complexes. This chain is Serine/threonine-protein phosphatase 2A 65 kDa regulatory subunit A alpha isoform (PP2AA1), found in Arabidopsis thaliana (Mouse-ear cress).